A 446-amino-acid polypeptide reads, in one-letter code: Exodeoxyribonuclease 7 large subunit (446 aa).

This sequence belongs to the XseA family. In terms of assembly, heterooligomer composed of large and small subunits.

The protein localises to the cytoplasm. It carries out the reaction Exonucleolytic cleavage in either 5'- to 3'- or 3'- to 5'-direction to yield nucleoside 5'-phosphates.. In terms of biological role, bidirectionally degrades single-stranded DNA into large acid-insoluble oligonucleotides, which are then degraded further into small acid-soluble oligonucleotides. This chain is Exodeoxyribonuclease 7 large subunit, found in Shewanella denitrificans (strain OS217 / ATCC BAA-1090 / DSM 15013).